The following is a 130-amino-acid chain: Small ribosomal subunit protein uS8 (130 aa).

This sequence belongs to the universal ribosomal protein uS8 family. Part of the 30S ribosomal subunit. Contacts proteins S5 and S12.

In terms of biological role, one of the primary rRNA binding proteins, it binds directly to 16S rRNA central domain where it helps coordinate assembly of the platform of the 30S subunit. This is Small ribosomal subunit protein uS8 from Pectobacterium atrosepticum (strain SCRI 1043 / ATCC BAA-672) (Erwinia carotovora subsp. atroseptica).